The primary structure comprises 776 residues: MVGLSAHHRPLGCRLLILFCLLHPGASGQPYPTSNTAGEEALSVQGVRGSSVELECRTGPAPMAVLWSFTPLGSLVLQPVAVTSGASSKVESGALALGVVSLRNSSLVIEELREGARGHFLCQTLLVSGGQVHTAYLYLMLTVLVPVSKPRVQLNDPSPVEGVSVVATCAVREGTEPLTFSWHHHMPQGPGEVLVGLSEPRLQLDPVNRTHLGWYTCSVSNVVNQLKSDGAFLDVIYGPDKPVITVEPLGFSEDGFWASEREEVTLSCLAASNPPSHYVWFRDDSQIHTGPTYIIASASRTHTGLYTCLAHNRHLDTHTQTTVQLIIYYPPEGQPSCAVLPTLGVVTLLCTWPGGFPNAQLHWEGPQGIGPSASGNVTWSYTTTGLPNGSIFSCTGQHPTLAMPIFCRVTLWEPPGSPTCWTTATVGDQYIMLSCEWPGGEPPAMLSWLDRQQSLGDLGSSQAVHLLQAQSDLAGREFTCQGSHPLTAPGSHCRLRLEVPQLTVAEPRVSVLEGEEAWLGCALQRGTPPAQLLWLGPQQQQLEGSTPGFILHPEGTHLRLQVRDADPAHHRGTYQCVARNALGNSSQSVLLEVLSECKGFVCPCGYPTPPNVTISRLTYRRQRREVQLQWAIYGPGNLTGFLVQQRASVPSSEAGAWEVAASDIEPESRDRRLGGLDPGVLYAFRILAMNHHTAGYPSEVKTPVDPAFSAYPAVLGAAGTGVVVALATSLLVFQYAARHPHTFPCTETASTTSSSDPIQESIDAPVNVTITVTATP.

The N-terminal stretch at 1 to 28 is a signal peptide; sequence MVGLSAHHRPLGCRLLILFCLLHPGASG. 5 consecutive Ig-like domains span residues 32 to 140, 150 to 234, 242 to 324, 399 to 498, and 500 to 592; these read PTSN…LYLM, PRVQ…AFLD, PVIT…TTVQ, PTLA…LRLE, and PQLT…VLLE. 5 disulfide bridges follow: Cys-56–Cys-122, Cys-169–Cys-217, Cys-268–Cys-308, Cys-435–Cys-480, and Cys-521–Cys-576. Residues 608–708 enclose the Fibronectin type-III domain; sequence TPPNVTISRL…EVKTPVDPAF (101 aa). Asn-611 and Asn-637 each carry an N-linked (GlcNAc...) asparagine glycan. Residues 713–733 traverse the membrane as a helical segment; it reads AVLGAAGTGVVVALATSLLVF.

The protein localises to the membrane. This chain is V-set and immunoglobulin domain-containing protein 10-like 2, found in Mus musculus (Mouse).